A 418-amino-acid polypeptide reads, in one-letter code: Centromere protein U (418 aa).

A compositionally biased stretch (basic residues) spans 1-11; that stretch reads MAPRGRRRPRP. Residues 1-76 are disordered; the sequence is MAPRGRRRPR…TYETFDPPLH (76 aa). Positions 6–23 match the Nuclear localization signal motif; the sequence is RRRPRPHRSEGARRSKNT. Positions 12-42 are enriched in basic and acidic residues; it reads HRSEGARRSKNTLERTHSMKDKAGQKCKPID. T78 bears the Phosphothreonine; by PLK1 mark. The tract at residues 88–227 is disordered; the sequence is SKHCGLSLSS…KRKKSRSKAI (140 aa). T98 carries the post-translational modification Phosphothreonine. S108 carries the phosphoserine modification. Residue T110 is modified to Phosphothreonine. S111, S116, and S120 each carry phosphoserine. Basic residues predominate over residues 124 to 133; that stretch reads SAKKPGRKLR. A phosphoserine mark is found at S136, S139, and S141. A compositionally biased stretch (basic and acidic residues) spans 145–165; sequence SDTRRKVKSAEKISTQRHEVI. Residues 180–193 are compositionally biased toward polar residues; the sequence is SVTSKKTGPLSAQP. Residue K185 forms a Glycyl lysine isopeptide (Lys-Gly) (interchain with G-Cter in SUMO2) linkage. Phosphoserine occurs at positions 190 and 194. Basic residues predominate over residues 208 to 224; the sequence is TQKKGKISHDKRKKSRS. The residue at position 232 (S232) is a Phosphoserine. Coiled coils occupy residues 297–356 and 397–417; these read QMLT…NAAY and LLGA…LLDQ. Positions 303-320 match the Nuclear localization signal motif; the sequence is KRKNAKMISDIEKKRQRM.

The protein belongs to the CENP-U/AME1 family. Component of the CENPA-NAC complex, at least composed of CENPA, CENPC, CENPH, CENPM, CENPN, CENPT and CENPU. The CENPA-NAC complex interacts with the CENPA-CAD complex, composed of CENPI, CENPK, CENPL, CENPO, CENPP, CENPQ, CENPR and CENPS. Interacts with MLF1. Interacts with PLK1. In terms of assembly, (Microbial infection) Interacts with the N-terminal domain of Kaposi's sarcoma-associated herpesvirus latent nuclear antigen (LNA). Phosphorylated by PLK1 at Thr-78, creating a self-tethering site that specifically interacts with the polo-box domain of PLK1. As to expression, expressed at high levels in the testis, fetal liver, thymus, bone marrow and at lower levels in the lymph nodes, placenta, colon and spleen. Present in all cell lines examined, including B-cells, T-cells, epithelial cells and fibroblast cells. Expressed at high levels in glioblastoma cell lines.

It localises to the cytoplasm. The protein localises to the nucleus. It is found in the chromosome. Its subcellular location is the centromere. The protein resides in the kinetochore. In terms of biological role, component of the CENPA-NAC (nucleosome-associated) complex, a complex that plays a central role in assembly of kinetochore proteins, mitotic progression and chromosome segregation. The CENPA-NAC complex recruits the CENPA-CAD (nucleosome distal) complex and may be involved in incorporation of newly synthesized CENPA into centromeres. Plays an important role in the correct PLK1 localization to the mitotic kinetochores. A scaffold protein responsible for the initial recruitment and maintenance of the kinetochore PLK1 population until its degradation. Involved in transcriptional repression. In Homo sapiens (Human), this protein is Centromere protein U (CENPU).